The chain runs to 635 residues: MGVPSPVRRVCVTVGALVALACMVLAGCTVSPPPAPQSTDTPRSTPPPPRRPTQIIMGIDWIGPGFNPHLLSDLSPVNAAISALVLPSAFRPIPDPNTPTGSRWEMDPTLLVSADVTNNHPFTVTYKIRPEAQWTDNAPIAADDFWYLWQQMVTQPGVVDPAGYHLITSVQSLEGGKQAVVTFAQPYPAWRELFTDILPAHIVKDIPGGFASGLARALPVTGGQFRVENIDPQRDEILIARNDRYWGPPSKPGIILFRRAGAPAALADSVRNGDTQVAQVHGGSAAFAQLSAIPDVRTARIVTPRVMQFTLRANVPKLADTQVRKAILGLLDVDLLAAVGAGTDNTVTLDQAQIRSPSDPGYVPTAPPAMSSAAALGLLEASGFQVDTNTSVSPAPSVPDSTTTSVSTGPPEVIRGRISKDGEQLTLVIGVAANDPTSVAVANTAADQLRDVGIAATVLALDPVTLYHDALNDNRVDAIVGWRQAGGNLATLLASRYGCPALQATTVPAANAPTTAPSAPIGPTPSAAPDTATPPPTAPRRPSDPGALVKAPSNLTGICDRSIQSNIDAALNGTKNINDVITAVEPRLWNMSTVLPILQDTTIVAAGPSVQNVSLSGAVPVGIVGDAGQWVKTGQ.

A signal peptide spans 1–26; it reads MGVPSPVRRVCVTVGALVALACMVLA. Disordered stretches follow at residues 32-52, 389-412, and 511-551; these read PPPA…PRRP, NTSV…GPPE, and NAPT…LVKA. 2 stretches are compositionally biased toward low complexity: residues 390-411 and 511-531; these read TSVS…TGPP and NAPT…APDT.

Belongs to the bacterial solute-binding protein 5 family.

It functions in the pathway phospholipid metabolism; phosphatidylinositol metabolism. Its function is as follows. May directly or indirectly regulate the accessibility of the key branch point intermediate, monoacyl phosphatidylinositol tetramannoside (AcPIM4), to the elongating alpha-1,6 mannosyltransferases which could regulate the lipoarabinomannans (LAMs) biosynthesis. This is Probable monoacyl phosphatidylinositol tetramannoside-binding protein LpqW (lpqW) from Mycobacterium tuberculosis (strain CDC 1551 / Oshkosh).